A 112-amino-acid polypeptide reads, in one-letter code: UPF0342 protein STH1710 (112 aa).

Belongs to the UPF0342 family.

In Symbiobacterium thermophilum (strain DSM 24528 / JCM 14929 / IAM 14863 / T), this protein is UPF0342 protein STH1710.